The following is a 704-amino-acid chain: Methionine--tRNA ligase (704 aa).

The 'HIGH' region signature appears at 17-27 (PYANGPIHLGH). The Zn(2+) site is built by cysteine 148, cysteine 151, cysteine 161, and cysteine 164. The 'KMSKS' region motif lies at 348–352 (KMSKS). Residue lysine 351 participates in ATP binding. A tRNA-binding domain is found at 603–704 (ELSKVELRVG…KDAKPGDRLK (102 aa)).

Belongs to the class-I aminoacyl-tRNA synthetase family. MetG type 1 subfamily. Homodimer. Zn(2+) is required as a cofactor.

It is found in the cytoplasm. The catalysed reaction is tRNA(Met) + L-methionine + ATP = L-methionyl-tRNA(Met) + AMP + diphosphate. In terms of biological role, is required not only for elongation of protein synthesis but also for the initiation of all mRNA translation through initiator tRNA(fMet) aminoacylation. The chain is Methionine--tRNA ligase from Leptospira borgpetersenii serovar Hardjo-bovis (strain L550).